Consider the following 280-residue polypeptide: DegV domain-containing protein spyM18_1709 (280 aa).

A DegV domain is found at 3-280 (WKIVTDSGCD…DGGLLMGYEI (278 aa)). Hexadecanoate is bound by residues Ser-63 and Ser-91.

May bind long-chain fatty acids, such as palmitate, and may play a role in lipid transport or fatty acid metabolism. This chain is DegV domain-containing protein spyM18_1709, found in Streptococcus pyogenes serotype M18 (strain MGAS8232).